The primary structure comprises 143 residues: Hemoglobin subunit alpha (143 aa).

In terms of domain architecture, Globin spans 2–143; sequence SLTARDKSVV…LSAALADKYR (142 aa). Histidine 60 contacts O2. Histidine 89 is a binding site for heme b.

Belongs to the globin family. In terms of assembly, heterotetramer of two alpha chains and two beta chains. In terms of tissue distribution, red blood cells.

In terms of biological role, involved in oxygen transport from gills to the various peripheral tissues. The polypeptide is Hemoglobin subunit alpha (hba) (Salmo salar (Atlantic salmon)).